We begin with the raw amino-acid sequence, 62 residues long: Small EDRK-rich factor 1 (62 aa).

Basic and acidic residues-rich tracts occupy residues 1–30 (MARG…KEDS) and 50–62 (AANE…TREK). Residues 1-62 (MARGNQRELA…ERKSMQTREK (62 aa)) are disordered.

The protein belongs to the SERF family. Interacts with SNCA; this interaction promotes the aggregation of SNCA.

It localises to the cytoplasm. The protein localises to the cytosol. Its subcellular location is the nucleus. Functionally, positive regulator of amyloid protein aggregation and proteotoxicity. Induces conformational changes in amyloid proteins, such as APP, HTT, and SNCA, driving them into compact formations preceding the formation of aggregates. This is Small EDRK-rich factor 1 (SERF1) from Bos taurus (Bovine).